Consider the following 160-residue polypeptide: Putative control protein C.MjaVP (160 aa).

Functionally, may be involved in control of expression of the type II restriction enzyme MjaV and/or its methyltransferase M.MjaV. This Methanocaldococcus jannaschii (strain ATCC 43067 / DSM 2661 / JAL-1 / JCM 10045 / NBRC 100440) (Methanococcus jannaschii) protein is Putative control protein C.MjaVP.